The chain runs to 371 residues: Probable acetylxylan esterase A (371 aa).

The first 19 residues, 1-19 (MRALSVFVALFSFLALSSA), serve as a signal peptide directing secretion. The catalytic stretch occupies residues 32–304 (GSLQQVTNFG…GEQDMEWFGF (273 aa)). Serine 149 (charge relay system) is an active-site residue. N-linked (GlcNAc...) asparagine glycosylation occurs at asparagine 191. The disordered stretch occupies residues 305 to 335 (TGGSSSTTTTATTPPTTSTTTSSGGSSTSTG). Residues 305 to 336 (TGGSSSTTTTATTPPTTSTTTSSGGSSTSTGV) are ser/Thr-rich linker. Positions 307 to 335 (GSSSTTTTATTPPTTSTTTSSGGSSTSTG) are enriched in low complexity. One can recognise a CBM1 domain in the interval 335-371 (GVAEHWGQCGGNGWTGPTACASGYTCTVINEWYSQCL).

It belongs to the carbohydrate esterase 1 (CE1) family. AxeA subfamily. Monomer.

It localises to the secreted. The catalysed reaction is Deacetylation of xylans and xylo-oligosaccharides.. It participates in glycan degradation; xylan degradation. Acetylxylan esterase involved in the hydrolysis of xylan, a major structural heterogeneous polysaccharide found in plant biomass representing the second most abundant polysaccharide in the biosphere, after cellulose. Degrades acetylated xylans by cleaving acetyl side groups from the hetero-xylan backbone. This chain is Probable acetylxylan esterase A (axeA), found in Aspergillus fumigatus (strain ATCC MYA-4609 / CBS 101355 / FGSC A1100 / Af293) (Neosartorya fumigata).